The following is a 122-amino-acid chain: uncharacterized protein (122 aa).

The signal sequence occupies residues 1 to 35; that stretch reads MCCYVGKATKIFLCLAAALIVVGLVLGFGLAHRTW. The segment at 55 to 83 is disordered; it reads YGGGGGGGDPLPATSGAGDTPPGVPLTEP.

This is an uncharacterized protein from Oryza sativa subsp. japonica (Rice).